The chain runs to 190 residues: ATP synthase subunit b (190 aa).

Residues Leu-34–Phe-54 form a helical membrane-spanning segment.

The protein belongs to the ATPase B chain family. In terms of assembly, F-type ATPases have 2 components, F(1) - the catalytic core - and F(0) - the membrane proton channel. F(1) has five subunits: alpha(3), beta(3), gamma(1), delta(1), epsilon(1). F(0) has four main subunits: a(1), b(1), b'(1) and c(10-14). The alpha and beta chains form an alternating ring which encloses part of the gamma chain. F(1) is attached to F(0) by a central stalk formed by the gamma and epsilon chains, while a peripheral stalk is formed by the delta, b and b' chains.

Its subcellular location is the cellular thylakoid membrane. In terms of biological role, f(1)F(0) ATP synthase produces ATP from ADP in the presence of a proton or sodium gradient. F-type ATPases consist of two structural domains, F(1) containing the extramembraneous catalytic core and F(0) containing the membrane proton channel, linked together by a central stalk and a peripheral stalk. During catalysis, ATP synthesis in the catalytic domain of F(1) is coupled via a rotary mechanism of the central stalk subunits to proton translocation. Component of the F(0) channel, it forms part of the peripheral stalk, linking F(1) to F(0). The polypeptide is ATP synthase subunit b (Nostoc punctiforme (strain ATCC 29133 / PCC 73102)).